Reading from the N-terminus, the 308-residue chain is High-affinity branched-chain amino acid transport system permease protein LivH (308 aa).

At 1 to 21 the chain is on the cytoplasmic side; sequence MSEQFLYFLQQMFNGVTLGST. A helical transmembrane segment spans residues 22–42; it reads YALIAIGYTMVYGIIGMINFA. Over 43–45 the chain is Periplasmic; sequence HGE. A helical membrane pass occupies residues 46-66; the sequence is VYMIGSYVSFMIIAALMMMGI. The Cytoplasmic segment spans residues 67–70; sequence DTSW. The chain crosses the membrane as a helical span at residues 71–91; that stretch reads LLVAAGFIGAIIIASAYGWSI. Topologically, residues 92-104 are periplasmic; the sequence is ERVAYRPVRNSKR. A helical transmembrane segment spans residues 105-125; sequence LIALISAIGMSIFLQNYVSLT. Over 126–154 the chain is Cytoplasmic; that stretch reads EGSRDVALPSLFNGQWIVGSSENFSASIT. Residues 155–175 form a helical membrane-spanning segment; that stretch reads TMQAVIWIVTFLAMLALTIFI. The Periplasmic portion of the chain corresponds to 176–203; that stretch reads RYSRMGRACRACAEDLKMASLLGINTDR. Residues 204–224 form a helical membrane-spanning segment; the sequence is VIALTFVIGAAMAAVAGVLLG. Residues 225–246 lie on the Cytoplasmic side of the membrane; the sequence is QFYGVINPYIGFMAGMKAFTAA. A helical transmembrane segment spans residues 247–266; the sequence is VLGGIGSIPGAMIGGLILGV. The Periplasmic portion of the chain corresponds to 267-280; the sequence is AEALSSAYLSTEYK. Residues 281 to 301 traverse the membrane as a helical segment; it reads DVVSFALLILVLLVMPTGILG. Residues 302 to 308 are Cytoplasmic-facing; it reads RPEVEKV.

Belongs to the binding-protein-dependent transport system permease family. LivHM subfamily.

Its subcellular location is the cell inner membrane. Part of the binding-protein-dependent transport system for branched-chain amino acids. Probably responsible for the translocation of the substrates across the membrane. The polypeptide is High-affinity branched-chain amino acid transport system permease protein LivH (livH) (Salmonella typhimurium (strain LT2 / SGSC1412 / ATCC 700720)).